A 98-amino-acid polypeptide reads, in one-letter code: Citrate lyase acyl carrier protein (98 aa).

Position 14 is an O-(phosphoribosyl dephospho-coenzyme A)serine (serine 14).

This sequence belongs to the CitD family. In terms of assembly, oligomer with a subunit composition of (alpha,beta,gamma)6.

It localises to the cytoplasm. In terms of biological role, covalent carrier of the coenzyme of citrate lyase. The sequence is that of Citrate lyase acyl carrier protein from Shigella boydii serotype 4 (strain Sb227).